A 291-amino-acid chain; its full sequence is Homoserine kinase (291 aa).

79–89 (PLARGLGSSSA) contacts ATP.

Belongs to the GHMP kinase family. Homoserine kinase subfamily.

It is found in the cytoplasm. It carries out the reaction L-homoserine + ATP = O-phospho-L-homoserine + ADP + H(+). It functions in the pathway amino-acid biosynthesis; L-threonine biosynthesis; L-threonine from L-aspartate: step 4/5. Catalyzes the ATP-dependent phosphorylation of L-homoserine to L-homoserine phosphate. The sequence is that of Homoserine kinase from Leuconostoc citreum (strain KM20).